The chain runs to 354 residues: UDP-N-acetylglucosamine--N-acetylmuramyl-(pentapeptide) pyrophosphoryl-undecaprenol N-acetylglucosamine transferase (354 aa).

UDP-N-acetyl-alpha-D-glucosamine-binding positions include serine 11 to glycine 13, arginine 164, serine 194, and glutamine 289.

It belongs to the glycosyltransferase 28 family. MurG subfamily.

It is found in the cell membrane. The catalysed reaction is di-trans,octa-cis-undecaprenyl diphospho-N-acetyl-alpha-D-muramoyl-L-alanyl-D-glutamyl-meso-2,6-diaminopimeloyl-D-alanyl-D-alanine + UDP-N-acetyl-alpha-D-glucosamine = di-trans,octa-cis-undecaprenyl diphospho-[N-acetyl-alpha-D-glucosaminyl-(1-&gt;4)]-N-acetyl-alpha-D-muramoyl-L-alanyl-D-glutamyl-meso-2,6-diaminopimeloyl-D-alanyl-D-alanine + UDP + H(+). The protein operates within cell wall biogenesis; peptidoglycan biosynthesis. In terms of biological role, cell wall formation. Catalyzes the transfer of a GlcNAc subunit on undecaprenyl-pyrophosphoryl-MurNAc-pentapeptide (lipid intermediate I) to form undecaprenyl-pyrophosphoryl-MurNAc-(pentapeptide)GlcNAc (lipid intermediate II). The sequence is that of UDP-N-acetylglucosamine--N-acetylmuramyl-(pentapeptide) pyrophosphoryl-undecaprenol N-acetylglucosamine transferase from Shouchella clausii (strain KSM-K16) (Alkalihalobacillus clausii).